Reading from the N-terminus, the 257-residue chain is Acetylglutamate kinase (257 aa).

Substrate is bound by residues 43-44 (GG), arginine 65, and asparagine 157. ATP is bound by residues 180–185 (DVSGIL) and 208–210 (IIT).

It belongs to the acetylglutamate kinase family. ArgB subfamily. As to quaternary structure, homodimer.

The protein localises to the cytoplasm. The enzyme catalyses N-acetyl-L-glutamate + ATP = N-acetyl-L-glutamyl 5-phosphate + ADP. It participates in amino-acid biosynthesis; L-arginine biosynthesis; N(2)-acetyl-L-ornithine from L-glutamate: step 2/4. In terms of biological role, catalyzes the ATP-dependent phosphorylation of N-acetyl-L-glutamate. The protein is Acetylglutamate kinase of Salmonella agona (strain SL483).